We begin with the raw amino-acid sequence, 21 residues long: Azemiopsin (21 aa).

The span at 1–14 (DNWWPKPPHQGPRP) shows a compositional bias: pro residues. Positions 1–21 (DNWWPKPPHQGPRPPRPRPKP) are disordered. 3 implicated in receptor binding regions span residues 3–6 (WWPK), 8–11 (PHQG), and 13–14 (RP).

In terms of assembly, monomer. Expressed by the venom gland.

It localises to the secreted. In terms of biological role, in vitro, reversibly blocks human muscle-type nicotinic acetylcholine receptors (nAChR) alpha-1-beta-1-epsilon-delta/CHRNA1-CHRNB1-CHRNE-CHRND (EC(50)=0.44 uM) and alpha-1-beta-1-gamma-delta/CHRNA1-CHRNB1-CHRNG-CHRND (EC(50)=1.56 uM). Binds to nAChR from T.californica (IC(50)=0.03-0.18 uM), human neuronal nAChR alpha-7/CHRNA7 (IC(50)=22 uM) and acetylcholine-binding proteins (AChBP) from L.stagnalis (IC(50)=63 uM) and A.californica (IC(50)=230 uM). In Azemiops feae (Fea's viper), this protein is Azemiopsin.